The chain runs to 95 residues: Aspartyl/glutamyl-tRNA(Asn/Gln) amidotransferase subunit C (95 aa).

It belongs to the GatC family. As to quaternary structure, heterotrimer of A, B and C subunits.

The catalysed reaction is L-glutamyl-tRNA(Gln) + L-glutamine + ATP + H2O = L-glutaminyl-tRNA(Gln) + L-glutamate + ADP + phosphate + H(+). It carries out the reaction L-aspartyl-tRNA(Asn) + L-glutamine + ATP + H2O = L-asparaginyl-tRNA(Asn) + L-glutamate + ADP + phosphate + 2 H(+). Functionally, allows the formation of correctly charged Asn-tRNA(Asn) or Gln-tRNA(Gln) through the transamidation of misacylated Asp-tRNA(Asn) or Glu-tRNA(Gln) in organisms which lack either or both of asparaginyl-tRNA or glutaminyl-tRNA synthetases. The reaction takes place in the presence of glutamine and ATP through an activated phospho-Asp-tRNA(Asn) or phospho-Glu-tRNA(Gln). This is Aspartyl/glutamyl-tRNA(Asn/Gln) amidotransferase subunit C from Methylobacterium radiotolerans (strain ATCC 27329 / DSM 1819 / JCM 2831 / NBRC 15690 / NCIMB 10815 / 0-1).